Here is a 636-residue protein sequence, read N- to C-terminus: Threonine--tRNA ligase (636 aa).

The TGS domain occupies 1 to 61 (MPVITLPDGS…TQDVSLSIIT (61 aa)). Positions 242 to 533 (DHRKLGKKFD…LIEEYEGAFP (292 aa)) are catalytic. Zn(2+) is bound by residues cysteine 333, histidine 384, and histidine 510.

Belongs to the class-II aminoacyl-tRNA synthetase family. In terms of assembly, homodimer. Requires Zn(2+) as cofactor.

Its subcellular location is the cytoplasm. The catalysed reaction is tRNA(Thr) + L-threonine + ATP = L-threonyl-tRNA(Thr) + AMP + diphosphate + H(+). In terms of biological role, catalyzes the attachment of threonine to tRNA(Thr) in a two-step reaction: L-threonine is first activated by ATP to form Thr-AMP and then transferred to the acceptor end of tRNA(Thr). Also edits incorrectly charged L-seryl-tRNA(Thr). In Saccharophagus degradans (strain 2-40 / ATCC 43961 / DSM 17024), this protein is Threonine--tRNA ligase.